We begin with the raw amino-acid sequence, 231 residues long: Putative cobalt transport protein CbiM 1 (231 aa).

A run of 6 helical transmembrane segments spans residues 9–29 (PGPWWQIWWILSIPVFAYGIF), 41–61 (VLPLIAVSGAVIFVLSSLKLP), 74–94 (GMAVILFGPAITSVLSAIVLL), 107–127 (TFGANLMSMGIIGPFVAYAIY), 135–155 (VNFYVSAFVTATLADWVTYVV), and 181–201 (VFAITQIPLAILEASLITLLF).

It belongs to the CbiM family. Forms an energy-coupling factor (ECF) transporter complex composed of an ATP-binding protein (A component, CbiO), a transmembrane protein (T component, CbiQ) and 2 possible substrate-capture proteins (S components, CbiM and CbiN) of unknown stoichimetry.

The protein localises to the cell membrane. Its pathway is cofactor biosynthesis; adenosylcobalamin biosynthesis. Its function is as follows. Part of the energy-coupling factor (ECF) transporter complex CbiMNOQ involved in cobalt import. The protein is Putative cobalt transport protein CbiM 1 of Methanosarcina barkeri (strain Fusaro / DSM 804).